A 218-amino-acid chain; its full sequence is Sodium channel regulatory subunit beta-1 (218 aa).

Residues 1 to 18 form the signal peptide; sequence MGRLLAFVVGAALVSSAW. At 19–157 the chain is on the extracellular side; that stretch reads GGCVEVDSET…DKANRDMASI (139 aa). 2 disulfides stabilise this stretch: C21–C43 and C40–C121. Residues 22 to 150 form the Ig-like C2-type domain; the sequence is VEVDSETEAV…KIHLEVVDKA (129 aa). 4 N-linked (GlcNAc...) asparagine glycosylation sites follow: N93, N110, N114, and N135. The chain crosses the membrane as a helical span at residues 158-179; that stretch reads VSEIMMYVLIVVLTIWLVAEMV. At 180-218 the chain is on the cytoplasmic side; it reads YCYKKIAAATEAAAQENASEYLAITSESKENCTGVQVAE.

The protein belongs to the sodium channel auxiliary subunit SCN1B (TC 8.A.17) family. In terms of assembly, a voltage-gated sodium (Nav) channel consists of an ion-conducting pore-forming alpha subunit functional on its own that is regulated by one or more beta subunits. Interacts with SCN1A; regulatory subunit of SCN1A/Nav1.1. Interacts with SCN3A; regulatory subunit of SCN3A/Nav1.3. Interacts with SCN4A; regulatory subunit of SCN4A/Nav1.4. Interacts with SCN5A; regulatory subunit of SCN5A/Nav1.5. Interacts with SCN8A; regulatory subunit of SCN8A/Nav1.6. Interacts with SCN9A; regulatory subunit of SCN9A/Nav1.7. Interacts with SCN10A; regulatory subunit of SCN10A/Nav1.8. Interacts with NFASC. Interacts with TMEM65.

The protein resides in the cell membrane. It localises to the perikaryon. The protein localises to the cell projection. It is found in the axon. In terms of biological role, regulatory subunit of multiple voltage-gated sodium (Nav) channels directly mediating the depolarization of excitable membranes. Navs, also called VGSCs (voltage-gated sodium channels) or VDSCs (voltage-dependent sodium channels), operate by switching between closed and open conformations depending on the voltage difference across the membrane. In the open conformation they allow Na(+) ions to selectively pass through the pore, along their electrochemical gradient. The influx of Na+ ions provokes membrane depolarization, initiating the propagation of electrical signals throughout cells and tissues. The accessory beta subunits participate in localization and functional modulation of the Nav channels. Modulates the activity of SCN1A/Nav1.1, SCN2A/Nav1.2, SCN3A/Nav1.3, SCN4A/Nav1.4, SCN5A/Nav1.5, SCN8A/Nav1.6, SCN9A/Nav1.7 and SCN10A/Nav1.8. In Oryctolagus cuniculus (Rabbit), this protein is Sodium channel regulatory subunit beta-1.